The sequence spans 842 residues: DNA gyrase subunit A (842 aa).

Residues 42 to 511 (LPEVRDGLKP…ADGEVSDEDL (470 aa)) enclose the Topo IIA-type catalytic domain. Tyr-130 functions as the O-(5'-phospho-DNA)-tyrosine intermediate in the catalytic mechanism. The GyrA-box motif lies at 538–544 (QKRGGKG). Residues 822-842 (EDEAAESISESDADTAESPEA) form a disordered region.

It belongs to the type II topoisomerase GyrA/ParC subunit family. As to quaternary structure, heterotetramer, composed of two GyrA and two GyrB chains. In the heterotetramer, GyrA contains the active site tyrosine that forms a transient covalent intermediate with DNA, while GyrB binds cofactors and catalyzes ATP hydrolysis.

Its subcellular location is the cytoplasm. It carries out the reaction ATP-dependent breakage, passage and rejoining of double-stranded DNA.. Inhibited by 4-quinoline drugs (nalidixic acid, ciprofloxacin, ofloxacin), although it is much less sensitive than the corresponding enzyme from E.coli. Functionally, a type II topoisomerase that negatively supercoils closed circular double-stranded (ds) DNA in an ATP-dependent manner to modulate DNA topology and maintain chromosomes in an underwound state. Negative supercoiling favors strand separation, and DNA replication, transcription, recombination and repair, all of which involve strand separation. Also able to catalyze the interconversion of other topological isomers of dsDNA rings, including catenanes and knotted rings. Type II topoisomerases break and join 2 DNA strands simultaneously in an ATP-dependent manner. In Mycolicibacterium smegmatis (strain ATCC 700084 / mc(2)155) (Mycobacterium smegmatis), this protein is DNA gyrase subunit A.